Here is a 460-residue protein sequence, read N- to C-terminus: V-type ATP synthase beta chain (460 aa).

Belongs to the ATPase alpha/beta chains family.

Produces ATP from ADP in the presence of a proton gradient across the membrane. The V-type beta chain is a regulatory subunit. This chain is V-type ATP synthase beta chain, found in Dictyoglomus turgidum (strain DSM 6724 / Z-1310).